The chain runs to 136 residues: Cell division protein SepF 3 (136 aa).

It belongs to the SepF family. In terms of assembly, homodimer. Interacts with FtsZ.

The protein localises to the cytoplasm. In terms of biological role, cell division protein that is part of the divisome complex and is recruited early to the Z-ring. Probably stimulates Z-ring formation, perhaps through the cross-linking of FtsZ protofilaments. Its function overlaps with FtsA. This Streptomyces coelicolor (strain ATCC BAA-471 / A3(2) / M145) protein is Cell division protein SepF 3.